Reading from the N-terminus, the 330-residue chain is ADP-L-glycero-D-manno-heptose-6-epimerase (330 aa).

Residues 11-12, 32-33, Lys-39, Lys-54, 75-79, and Asn-92 contribute to the NADP(+) site; these read FI, DN, and EGACS. The Proton acceptor role is filled by Tyr-139. Lys-143 is a binding site for NADP(+). Asn-168 contributes to the substrate binding site. Positions 169 and 177 each coordinate NADP(+). Lys-177 (proton acceptor) is an active-site residue. Residues Arg-179, His-186, 200–203, Arg-213, and Tyr-292 contribute to the substrate site; that span reads FGEY.

Belongs to the NAD(P)-dependent epimerase/dehydratase family. HldD subfamily. In terms of assembly, homopentamer. It depends on NADP(+) as a cofactor.

The catalysed reaction is ADP-D-glycero-beta-D-manno-heptose = ADP-L-glycero-beta-D-manno-heptose. Its pathway is nucleotide-sugar biosynthesis; ADP-L-glycero-beta-D-manno-heptose biosynthesis; ADP-L-glycero-beta-D-manno-heptose from D-glycero-beta-D-manno-heptose 7-phosphate: step 4/4. Catalyzes the interconversion between ADP-D-glycero-beta-D-manno-heptose and ADP-L-glycero-beta-D-manno-heptose via an epimerization at carbon 6 of the heptose. This Burkholderia ambifaria (strain ATCC BAA-244 / DSM 16087 / CCUG 44356 / LMG 19182 / AMMD) (Burkholderia cepacia (strain AMMD)) protein is ADP-L-glycero-D-manno-heptose-6-epimerase.